Reading from the N-terminus, the 624-residue chain is uncharacterized protein (624 aa).

Residues 113–249 form a disordered region; the sequence is SINVRTSATT…RFHPVTDINK (137 aa). Residues 118–225 are compositionally biased toward low complexity; sequence TSATTTESTN…ATTTESTNAS (108 aa). The span at 226–249 shows a compositional bias: basic and acidic residues; sequence AKEDANKDGNAEDNRFHPVTDINK.

This is an uncharacterized protein from Saccharomyces cerevisiae (strain ATCC 204508 / S288c) (Baker's yeast).